A 350-amino-acid chain; its full sequence is MKKIAIIFGGNSPEYTVSLASATSAIEALQSSPYDYDLSLIGIAPDAMDWYLYTGELENIRQDTWLLDTKHKQKIQPLFEGNGFWLSEEQQTLVPDVLFPIMHGKYGEDGSIQGLFELMKLPYVGCGVAGSALCMNKWLLHQAAAAIGVQSAPTILLTNQANQQEQIEAFIQTHGFPVFFKPNEAGSSKGITKVTCVEEIASALKEAFTYCSAVLLQKNIAGVEIGCGILGNDSLTVGACDAISLVDGFFDFEEKYQLISAKITVPAPLPETIETKVKEQAQLLYRSLGLKGLARIDFFVTERGELYLNEINTMPGFTSHSRYPAMMAAVGLSYQELLQKLLVLAKEEVK.

Catalysis depends on residues glutamate 14 and serine 187. In terms of domain architecture, ATP-grasp spans 141–343; the sequence is HQAAAAIGVQ…YQELLQKLLV (203 aa). 171–226 serves as a coordination point for ATP; sequence IQTHGFPVFFKPNEAGSSKGITKVTCVEEIASALKEAFTYCSAVLLQKNIAGVEIG. Mg(2+) contacts are provided by aspartate 297, glutamate 310, and asparagine 312. Residues aspartate 297, glutamate 310, and asparagine 312 each coordinate Mn(2+). Serine 321 is an active-site residue.

Belongs to the D-alanine--D-alanine ligase family. In terms of assembly, homodimer. Mg(2+) is required as a cofactor. The cofactor is Mn(2+).

Its subcellular location is the cell membrane. It carries out the reaction D-serine + D-alanine + ATP = D-alanyl-D-serine + ADP + phosphate + H(+). Its pathway is cell wall biogenesis; peptidoglycan biosynthesis. Its activity is regulated as follows. Inhibited by D-cycloserine. Required for low-level resistance to the glycopeptide antibiotic vancomycin. D-alanine--D-alanine ligase of altered specificity, which catalyzes synthesis of D-Ala-D-Ser; produces a peptidoglycan which does not terminate in D-alanine but in D-serine, thus probably reducing affinity for vancomycin. Only insignificant catalytic synthesis of D-Ala-D-Ala in vitro. This chain is Vancomycin C-type resistance protein VanC2, found in Enterococcus casseliflavus (Enterococcus flavescens).